The following is an 87-amino-acid chain: U14-lycotoxin-Ls1a (87 aa).

The signal sequence occupies residues 1–20 (MNSKVFAVLLLLALSTCVLS). One can recognise a WAP domain in the interval 21-66 (EKYCPTPRNTSCKKMNIRNNCCRDSDCTSNAFCCAEPCGNFCHKAS). Cystine bridges form between C24–C54, C32–C58, C41–C53, C42–C80, and C47–C62.

Belongs to the venom protein 11 family. 01 (wap-1) subfamily. In terms of processing, contains 5 disulfide bonds. As to expression, expressed by the venom gland.

It localises to the secreted. In terms of biological role, has antibacterial activity. The sequence is that of U14-lycotoxin-Ls1a from Lycosa singoriensis (Wolf spider).